We begin with the raw amino-acid sequence, 203 residues long: Serine hydrolase-like protein (203 aa).

The AB hydrolase-1 domain occupies Pro33–Asn145. Residue Ser108 is part of the active site.

Belongs to the AB hydrolase superfamily.

Functionally, putative serine hydrolase. The sequence is that of Serine hydrolase-like protein (SERHL) from Homo sapiens (Human).